Reading from the N-terminus, the 494-residue chain is MTDIIRSDAATLAAKIAIKEVSSAEITRACLDQIEATDETYHAFLHVAADEALAAAAAIDKQVAAGEPLPSALAGVPLALKDVFTTSDMPTTCGSKILEGWRSPYDATLTARLRAAGIPILGKTNMDEFAMGSSTENSAYGPTRNPWNLDRVPGGSGGGSAAALAAFQAPLAIGSDTGGSIRQPAALTATVGVKPTYGTVSRYGLVACASSLDQGGPCARTVLDTALLHQVIAGHDPRDSTSVDAEVPDVVGAARAGAVGDLRGVRVGVVRQLHGGEGYQPGVLASFEAAVEQLTALGAEVSEVDCPHFDHALAAYYLILPSEVSSNLARFDAMRYGLRVGDDGTRSAEEVMAMTRAAGFGPEVKRRIMIGTYALSAGYYDAYYNQAQKVRTLIARDLDAAYRSVDVLVSPTTPTTAFRLGEKVDDPLAMYLFDLCTLPLNLAGHCGMSVPSGLSPDDGLPVGLQIMAPALADDRLYRVGAAYEAARGPLLSAI.

Catalysis depends on charge relay system residues Lys-81 and Ser-156. Ser-180 serves as the catalytic Acyl-ester intermediate.

This sequence belongs to the amidase family. GatA subfamily. As to quaternary structure, heterotrimer of A, B and C subunits.

The catalysed reaction is L-glutamyl-tRNA(Gln) + L-glutamine + ATP + H2O = L-glutaminyl-tRNA(Gln) + L-glutamate + ADP + phosphate + H(+). Its function is as follows. Allows the formation of correctly charged Gln-tRNA(Gln) through the transamidation of misacylated Glu-tRNA(Gln) in organisms which lack glutaminyl-tRNA synthetase. The reaction takes place in the presence of glutamine and ATP through an activated gamma-phospho-Glu-tRNA(Gln). The polypeptide is Glutamyl-tRNA(Gln) amidotransferase subunit A (Mycobacterium tuberculosis (strain ATCC 25177 / H37Ra)).